We begin with the raw amino-acid sequence, 176 residues long: NADH-quinone oxidoreductase subunit I (176 aa).

4Fe-4S ferredoxin-type domains lie at 47–77 (LTRD…MQAA) and 87–116 (AWFR…MTSE). Residues Cys-57, Cys-60, Cys-63, Cys-67, Cys-96, Cys-99, Cys-102, and Cys-106 each contribute to the [4Fe-4S] cluster site.

Belongs to the complex I 23 kDa subunit family. In terms of assembly, NDH-1 is composed of 14 different subunits. Subunits NuoA, H, J, K, L, M, N constitute the membrane sector of the complex. [4Fe-4S] cluster is required as a cofactor.

It localises to the cell inner membrane. The enzyme catalyses a quinone + NADH + 5 H(+)(in) = a quinol + NAD(+) + 4 H(+)(out). Functionally, NDH-1 shuttles electrons from NADH, via FMN and iron-sulfur (Fe-S) centers, to quinones in the respiratory chain. The immediate electron acceptor for the enzyme in this species is believed to be ubiquinone. Couples the redox reaction to proton translocation (for every two electrons transferred, four hydrogen ions are translocated across the cytoplasmic membrane), and thus conserves the redox energy in a proton gradient. The chain is NADH-quinone oxidoreductase subunit I from Syntrophotalea carbinolica (strain DSM 2380 / NBRC 103641 / GraBd1) (Pelobacter carbinolicus).